Consider the following 261-residue polypeptide: 3-hydroxyacyl-CoA dehydrogenase type-2 (261 aa).

Residue A2 is modified to N-acetylalanine. Residues S20, L22, and D41 each coordinate NAD(+). K53 bears the N6-acetyllysine; alternate mark. Residue K53 is modified to N6-succinyllysine; alternate. The NAD(+) site is built by D64 and V65. K69 is modified (N6-acetyllysine). C91 is a binding site for NAD(+). K99 and K105 each carry N6-acetyllysine. S155 provides a ligand contact to substrate. NAD(+)-binding residues include Y168, K172, F201, and T203. Catalysis depends on Y168, which acts as the Proton acceptor. K212 is subject to N6-acetyllysine; alternate. The residue at position 212 (K212) is an N6-succinyllysine; alternate.

This sequence belongs to the short-chain dehydrogenases/reductases (SDR) family. In terms of assembly, homotetramer. Component of mitochondrial ribonuclease P, a complex composed of TRMT10C/MRPP1, HSD17B10/MRPP2 and PRORP/MRPP3. Interacts with TRMT10C/MRPP1; forming the MRPP1-MRPP2 subcomplex of the mitochondrial ribonuclease P complex.

The protein resides in the mitochondrion. It localises to the mitochondrion matrix. Its subcellular location is the mitochondrion nucleoid. The enzyme catalyses a (3S)-3-hydroxyacyl-CoA + NAD(+) = a 3-oxoacyl-CoA + NADH + H(+). The catalysed reaction is (2S,3S)-3-hydroxy-2-methylbutanoyl-CoA + NAD(+) = 2-methyl-3-oxobutanoyl-CoA + NADH + H(+). It carries out the reaction testosterone + NAD(+) = androst-4-ene-3,17-dione + NADH + H(+). It catalyses the reaction 5alpha-androstane-3alpha,17beta-diol + NAD(+) = 17beta-hydroxy-5alpha-androstan-3-one + NADH + H(+). The enzyme catalyses 17beta-estradiol + NAD(+) = estrone + NADH + H(+). The catalysed reaction is cholate + NAD(+) = 3alpha,12alpha-dihydroxy-7-oxo-5beta-cholanate + NADH + H(+). It carries out the reaction (3S)-3-hydroxybutanoyl-CoA + NAD(+) = acetoacetyl-CoA + NADH + H(+). It catalyses the reaction (3S)-hydroxyoctanoyl-CoA + NAD(+) = 3-oxooctanoyl-CoA + NADH + H(+). The enzyme catalyses (3S)-hydroxyhexadecanoyl-CoA + NAD(+) = 3-oxohexadecanoyl-CoA + NADH + H(+). The catalysed reaction is 17beta-hydroxy-5alpha-androstan-3-one + NAD(+) = 5alpha-androstan-3,17-dione + NADH + H(+). It carries out the reaction 5alpha-pregnan-20beta-ol-3-one + NAD(+) = 5alpha-pregnane-3,20-dione + NADH + H(+). It catalyses the reaction 3alpha-hydroxy-5alpha-pregnan-20-one + NAD(+) = 5alpha-pregnane-3,20-dione + NADH + H(+). The enzyme catalyses cortisone + NAD(+) = 17alpha-hydroxypregn-4-en-3,11,20-trione-21-al + NADH + H(+). The catalysed reaction is 11-dehydrocorticosterone + NAD(+) = pregn-4-ene-3,11,20,21-tetraone + NADH + H(+). It carries out the reaction cortisol + NAD(+) = 11beta,17alpha-dihydroxypregn-4-ene-3,20,21-trione + NADH + H(+). It catalyses the reaction chenodeoxycholate + NAD(+) = 7-oxolithocholate + NADH + H(+). The enzyme catalyses ursodeoxycholate + NAD(+) = 7-oxolithocholate + NADH + H(+). The catalysed reaction is 3beta,7beta-dihydroxy-5beta-cholan-24-oate + NAD(+) = 3beta-hydroxy-7-oxo-5beta-cholan-24-oate + NADH + H(+). It functions in the pathway amino-acid degradation; L-isoleucine degradation. It participates in lipid metabolism; fatty acid beta-oxidation. Its pathway is steroid metabolism. The protein operates within lipid metabolism; bile acid biosynthesis. In terms of biological role, mitochondrial dehydrogenase involved in pathways of fatty acid, branched-chain amino acid and steroid metabolism. Acts as (S)-3-hydroxyacyl-CoA dehydrogenase in mitochondrial fatty acid beta-oxidation, a major degradation pathway of fatty acids. Catalyzes the third step in the beta-oxidation cycle, namely the reversible conversion of (S)-3-hydroxyacyl-CoA to 3-ketoacyl-CoA. Preferentially accepts straight medium- and short-chain acyl-CoA substrates with highest efficiency for (3S)-hydroxybutanoyl-CoA. Acts as 3-hydroxy-2-methylbutyryl-CoA dehydrogenase in branched-chain amino acid catabolic pathway. Catalyzes the oxidation of 3-hydroxy-2-methylbutanoyl-CoA into 2-methyl-3-oxobutanoyl-CoA, a step in isoleucine degradation pathway. Has hydroxysteroid dehydrogenase activity toward steroid hormones and bile acids. Catalyzes the oxidation of 3alpha-, 17beta-, 20beta- and 21-hydroxysteroids and 7alpha- and 7beta-hydroxy bile acids. Oxidizes allopregnanolone/brexanolone at the 3alpha-hydroxyl group, which is known to be critical for the activation of gamma-aminobutyric acid receptors (GABAARs) chloride channel. Has phospholipase C-like activity toward cardiolipin and its oxidized species. Likely oxidizes the 2'-hydroxyl in the head group of cardiolipin to form a ketone intermediate that undergoes nucleophilic attack by water and fragments into diacylglycerol, dihydroxyacetone and orthophosphate. Has higher affinity for cardiolipin with oxidized fatty acids and may degrade these species during the oxidative stress response to protect cells from apoptosis. By interacting with intracellular amyloid-beta, it may contribute to the neuronal dysfunction associated with Alzheimer disease (AD). Essential for structural and functional integrity of mitochondria. Functionally, in addition to mitochondrial dehydrogenase activity, moonlights as a component of mitochondrial ribonuclease P, a complex that cleaves tRNA molecules in their 5'-ends. Together with TRMT10C/MRPP1, forms a subcomplex of the mitochondrial ribonuclease P, named MRPP1-MRPP2 subcomplex, which displays functions that are independent of the ribonuclease P activity. The MRPP1-MRPP2 subcomplex catalyzes the formation of N(1)-methylguanine and N(1)-methyladenine at position 9 (m1G9 and m1A9, respectively) in tRNAs; HSD17B10/MRPP2 acting as a non-catalytic subunit. The MRPP1-MRPP2 subcomplex also acts as a tRNA maturation platform: following 5'-end cleavage by the mitochondrial ribonuclease P complex, the MRPP1-MRPP2 subcomplex enhances the efficiency of 3'-processing catalyzed by ELAC2, retains the tRNA product after ELAC2 processing and presents the nascent tRNA to the mitochondrial CCA tRNA nucleotidyltransferase TRNT1 enzyme. Associates with mitochondrial DNA complexes at the nucleoids to initiate RNA processing and ribosome assembly. The protein is 3-hydroxyacyl-CoA dehydrogenase type-2 (HSD17B10) of Bos taurus (Bovine).